A 78-amino-acid chain; its full sequence is MERSSNEVSNPVAGNFVFPSNATFGMGDRVRKKSGAAWQGQIVGWYCTNLTPEGYAVESEAHPGSVQIYPVAALERIN.

Residues 32 to 36 (KKSGA) and 66 to 69 (VQIY) contribute to the NADP(+) site. A substrate-binding site is contributed by isoleucine 68.

Homotetramer.

The enzyme catalyses (6S)-5,6,7,8-tetrahydrofolate + NADP(+) = 7,8-dihydrofolate + NADPH + H(+). Its pathway is cofactor biosynthesis; tetrahydrofolate biosynthesis; 5,6,7,8-tetrahydrofolate from 7,8-dihydrofolate: step 1/1. Key enzyme in folate metabolism. Catalyzes an essential reaction for de novo glycine and purine synthesis, and for DNA precursor synthesis. In Escherichia coli, this protein is Dihydrofolate reductase type 2.